The chain runs to 129 residues: UPF0344 protein SAR0931 (129 aa).

Helical transmembrane passes span 1-21, 36-56, 67-87, and 99-119; these read MLHL…ATYL, LHMV…WILI, MLLT…EVSI, and MFWI…ILPL.

It belongs to the UPF0344 family.

It is found in the cell membrane. This is UPF0344 protein SAR0931 from Staphylococcus aureus (strain MRSA252).